Here is a 901-residue protein sequence, read N- to C-terminus: Aconitate hydratase A (901 aa).

Positions 443, 509, and 512 each coordinate [4Fe-4S] cluster.

Belongs to the aconitase/IPM isomerase family. Monomer. It depends on [4Fe-4S] cluster as a cofactor.

It carries out the reaction citrate = D-threo-isocitrate. The enzyme catalyses (2S,3R)-3-hydroxybutane-1,2,3-tricarboxylate = 2-methyl-cis-aconitate + H2O. It functions in the pathway carbohydrate metabolism; tricarboxylic acid cycle; isocitrate from oxaloacetate: step 2/2. It participates in organic acid metabolism; propanoate degradation. Involved in the catabolism of short chain fatty acids (SCFA) via the tricarboxylic acid (TCA)(acetyl degradation route) and probably the 2-methylcitrate cycle I (propionate degradation route). Catalyzes the reversible isomerization of citrate to isocitrate via cis-aconitate. Could catalyze the hydration of 2-methyl-cis-aconitate to yield (2R,3S)-2-methylisocitrate. The apo form of AcnA functions as a RNA-binding regulatory protein. This Staphylococcus epidermidis (strain ATCC 35984 / DSM 28319 / BCRC 17069 / CCUG 31568 / BM 3577 / RP62A) protein is Aconitate hydratase A (acnA).